Reading from the N-terminus, the 326-residue chain is Apoptosis facilitator Bcl-2-like protein 14 (326 aa).

At Ser44 the chain carries Phosphoserine. Residues 99 to 127 (TEKEEEPPSSPKEIHAQGPFPVERQGRNQ) form a disordered region. Residues 211–225 (IVELLKYSGDQLGRE) carry the BH3 motif. A BH2 motif is present at residues 307 to 314 (WVQQNGGW).

It belongs to the Bcl-2 family. In terms of processing, phosphorylated by MELK, leading to inhibit its pro-apoptotic function.

It localises to the cytoplasm. Functionally, plays a role in apoptosis. This is Apoptosis facilitator Bcl-2-like protein 14 (Bcl2l14) from Rattus norvegicus (Rat).